We begin with the raw amino-acid sequence, 29 residues long: Omega-conotoxin MVIIC (29 aa).

Residues 1 to 2 (TR) constitute a propeptide that is removed on maturation. Intrachain disulfides connect cysteine 3-cysteine 18, cysteine 10-cysteine 22, and cysteine 17-cysteine 28. Cysteine 28 is subject to Cysteine amide.

Belongs to the conotoxin O1 superfamily. In terms of processing, not hydroxylated; hydroxylation, on a synthetic hydroxylated MVIIC, has a significant impact on the oxidative folding but not on the biological activity. As to expression, expressed by the venom duct.

The protein localises to the secreted. Omega-conotoxins act at presynaptic membranes, they bind and block voltage-gated calcium channels (Cav). This toxin preferentially blocks P/Q-type calcium channels (Cav2.1/CACNA1A) (IC(50)=0.60 nM). Also shows an inhibition on Cav2.2/CACNA1A channels (IC(50)=7.0 nM). The chain is Omega-conotoxin MVIIC from Conus magus (Magical cone).